We begin with the raw amino-acid sequence, 503 residues long: Adenosine deaminase 2-A (503 aa).

A signal peptide spans 1 to 24 (MHVLFLGDLMWIYLLLLCCASCNG). His105 and His107 together coordinate Zn(2+). Asp108 lines the substrate pocket. The N-linked (GlcNAc...) asparagine glycan is linked to Asn120. Cys130 and Cys152 are oxidised to a cystine. N-linked (GlcNAc...) asparagine glycosylation is found at Asn167 and Asn178. Residues 197 to 204 (WERFEQVF) and His286 each bind substrate. A glycan (N-linked (GlcNAc...) asparagine) is linked at Asn290. Gly319 provides a ligand contact to substrate. Residue His349 participates in Zn(2+) binding. Catalysis depends on Glu352, which acts as the Proton donor. Asn371 is a glycosylation site (N-linked (GlcNAc...) asparagine). His377 functions as the Proton acceptor in the catalytic mechanism. Zn(2+) is bound at residue Asp434. Asp435 is a substrate binding site.

Belongs to the metallo-dependent hydrolases superfamily. Adenosine and AMP deaminases family. ADGF subfamily. The cofactor is Zn(2+).

It is found in the secreted. It catalyses the reaction adenosine + H2O + H(+) = inosine + NH4(+). Its function is as follows. Adenosine deaminase that may contribute to the degradation of extracellular adenosine, a signaling molecule that controls a variety of cellular responses. May play a role in the regulation of cell proliferation. The polypeptide is Adenosine deaminase 2-A (Danio rerio (Zebrafish)).